A 612-amino-acid polypeptide reads, in one-letter code: Elongation factor 4 (612 aa).

In terms of domain architecture, tr-type G spans 12–194 (SRIRNFSIIA…QIVEKVPAPA (183 aa)). Residues 24-29 (DHGKST) and 141-144 (NKID) each bind GTP.

The protein belongs to the TRAFAC class translation factor GTPase superfamily. Classic translation factor GTPase family. LepA subfamily.

It localises to the cell membrane. The enzyme catalyses GTP + H2O = GDP + phosphate + H(+). Functionally, required for accurate and efficient protein synthesis under certain stress conditions. May act as a fidelity factor of the translation reaction, by catalyzing a one-codon backward translocation of tRNAs on improperly translocated ribosomes. Back-translocation proceeds from a post-translocation (POST) complex to a pre-translocation (PRE) complex, thus giving elongation factor G a second chance to translocate the tRNAs correctly. Binds to ribosomes in a GTP-dependent manner. This Bacillus pumilus (strain SAFR-032) protein is Elongation factor 4.